Here is a 492-residue protein sequence, read N- to C-terminus: Spore germination protein GerLA (492 aa).

The next 3 membrane-spanning stretches (helical) occupy residues 295 to 315 (IIAVLLPAMYVALVSYHQGLI), 384 to 404 (FLVIIIAVTAIATFSLPVYSI), and 410 to 430 (ILLFVFVLAATAFGLYGIILA).

The protein belongs to the GerABKA family.

The protein localises to the membrane. Functionally, contributes to the L-alanine germination response. The sequence is that of Spore germination protein GerLA (gerLA) from Bacillus cereus.